Reading from the N-terminus, the 396-residue chain is Septu protein PtuA (396 aa).

Component of antiviral defense system Septu type I, composed of PtuA and PtuB. Expression of Septu type I in B.subtilis (strain BEST7003) confers resistance to phages SBSphiC and SBSphiJ. May be an ATPase. This is Septu protein PtuA from Bacillus thuringiensis.